The following is a 331-amino-acid chain: MKQTVYIASPESQQIHVWNLNHEGALTLTQVVDVPGQVQPMVVSPDKRYLYVGVRPEFRVLAYRIAPDDGALTFAAESALPGSPTHISTDHQGQFVFVGSYNAGNVSVTRLEDGLPVGVVDVVEGLDGCHSANISPDNRTLWVPALKQDRICLFTVSDDGHLVAQDPAEVTTIEGAGPRHMVFHPNEQYAYCVNELNSSVDVWELKDPHGNIECVQTLDIMPENFSDTRWAADIHITPDGRHLYACDRTASLITVFSVSEDGSVLSKEGFQPTETQPRGFNVDHSGKYLIAAGQKSHLISVYEIVGEQGLLHEKGRYAVGQGPMWVVVNAH.

The residue at position 287 (Lys287) is an N6-acetyllysine.

It belongs to the cycloisomerase 2 family.

It catalyses the reaction 6-phospho-D-glucono-1,5-lactone + H2O = 6-phospho-D-gluconate + H(+). The protein operates within carbohydrate degradation; pentose phosphate pathway; D-ribulose 5-phosphate from D-glucose 6-phosphate (oxidative stage): step 2/3. In terms of biological role, catalyzes the hydrolysis of 6-phosphogluconolactone to 6-phosphogluconate. This chain is 6-phosphogluconolactonase, found in Shigella boydii serotype 18 (strain CDC 3083-94 / BS512).